A 117-amino-acid polypeptide reads, in one-letter code: Large ribosomal subunit protein bL19 (117 aa).

This sequence belongs to the bacterial ribosomal protein bL19 family.

Functionally, this protein is located at the 30S-50S ribosomal subunit interface and may play a role in the structure and function of the aminoacyl-tRNA binding site. This Shewanella frigidimarina (strain NCIMB 400) protein is Large ribosomal subunit protein bL19.